The chain runs to 358 residues: Guanidino acid hydrolase, mitochondrial (358 aa).

The transit peptide at 1-36 directs the protein to the mitochondrion; the sequence is MLRLLRSSWARGLGSGVATWRPSAGLFRPGCPGIRQ. A disordered region spans residues 31 to 56; sequence CPGIRQASGASDTPHHQSPSSESPVQ. The segment covering 46 to 56 has biased composition (low complexity); the sequence is HQSPSSESPVQ. Positions 168 and 193 each coordinate Mn(2+). K199 is subject to N6-acetyllysine. K223 carries the N6-acetyllysine; alternate modification. K223 is subject to N6-succinyllysine; alternate. D284 lines the Mn(2+) pocket.

It belongs to the arginase family. Agmatinase subfamily. Mn(2+) serves as cofactor. In terms of tissue distribution, detected only in liver.

It localises to the mitochondrion. It catalyses the reaction 3-guanidinopropanoate + H2O = urea + beta-alanine. The catalysed reaction is 4-guanidinobutanoate + H2O = urea + 4-aminobutanoate. It carries out the reaction taurocyamine + H2O = urea + taurine. The enzyme catalyses L-arginine + H2O = urea + L-ornithine. It participates in nitrogen metabolism; urea cycle; L-ornithine and urea from L-arginine: step 1/1. Its function is as follows. Hydrolyzes linear guanidino acids to form urea and the corresponding amines. Displays specificity for substrates having a negatively charged head group and short chains including taurocyamine, guanidino propanoic and butanoic acids. May protect cells by detoxifying potentially harmful amounts of guanidino acids. Metabolizes L-arginine with low efficiency. The protein is Guanidino acid hydrolase, mitochondrial (Agmat) of Mus musculus (Mouse).